The following is a 207-amino-acid chain: Guanylate kinase (207 aa).

The Guanylate kinase-like domain maps to 4–184; that stretch reads GTLYIVSAPS…ALMDFKAIIR (181 aa). Position 11 to 18 (11 to 18) interacts with ATP; sequence APSGAGKS.

Belongs to the guanylate kinase family.

The protein localises to the cytoplasm. It catalyses the reaction GMP + ATP = GDP + ADP. Its function is as follows. Essential for recycling GMP and indirectly, cGMP. In Vibrio vulnificus (strain CMCP6), this protein is Guanylate kinase.